Here is a 486-residue protein sequence, read N- to C-terminus: Cardiolipin synthase A (486 aa).

Transmembrane regions (helical) follow at residues 3-23 (TVYT…IAGV) and 38-58 (MAWL…YLAV). PLD phosphodiesterase domains lie at 219 to 246 (MDLR…VDPR) and 399 to 426 (EGGL…DMRS). Active-site residues include H224, K226, D231, H404, K406, and D411.

The protein belongs to the phospholipase D family. Cardiolipin synthase subfamily. ClsA sub-subfamily.

It localises to the cell inner membrane. The enzyme catalyses 2 a 1,2-diacyl-sn-glycero-3-phospho-(1'-sn-glycerol) = a cardiolipin + glycerol. Catalyzes the reversible phosphatidyl group transfer from one phosphatidylglycerol molecule to another to form cardiolipin (CL) (diphosphatidylglycerol) and glycerol. This Shigella dysenteriae serotype 1 (strain Sd197) protein is Cardiolipin synthase A.